The chain runs to 134 residues: Prefoldin subunit 4 (134 aa).

Ala2 is modified (N-acetylalanine). Ser125 bears the Phosphoserine mark.

The protein belongs to the prefoldin subunit beta family. Heterohexamer of two PFD-alpha type and four PFD-beta type subunits. Interacts with URI1; the interaction is phosphorylation-dependent and occurs in a growth-dependent manner.

It is found in the nucleus. The protein resides in the cytoplasm. The protein localises to the mitochondrion. Its function is as follows. Binds specifically to cytosolic chaperonin (c-CPN) and transfers target proteins to it. Binds to nascent polypeptide chain and promotes folding in an environment in which there are many competing pathways for nonnative proteins. This Homo sapiens (Human) protein is Prefoldin subunit 4 (PFDN4).